A 68-amino-acid polypeptide reads, in one-letter code: uncharacterized protein (68 aa).

This is an uncharacterized protein from Saccharomyces cerevisiae (strain ATCC 204508 / S288c) (Baker's yeast).